A 349-amino-acid polypeptide reads, in one-letter code: MQTTIQKEEAPNRETLLTPRFYTTDFEEMASMNISENEQDFFAILEEFRADYNSQHFIRGEEFNQSWSNLETKTKSLFIEFLERSCTAEFSGFLLYKELSRKLKDSNPIIAECFLLMSRDEARHAGFLNKAIGDFNLSLDLGFLTKTRKYTFFSPKFIFYATYLSEKIGYWRYITIYRHMEQYPEHRIYPIFKFFENWCQDENRHGDFFAALLKSQPHFLNDWKAKMWCRFFLLSVFATMYLNDFQRIDFYNAIGLDSRQYDMQVIRKTNESAARVFPVALDVDNPKFFKYLDSCACNNRALIDIDKKGSQPLVKTFMKAPLYMSLILNLIKIYLIKPIDSQAVWNTVR.

This sequence belongs to the AcsF family. Fe cation serves as cofactor.

Its subcellular location is the plastid. It is found in the chloroplast. The enzyme catalyses Mg-protoporphyrin IX 13-monomethyl ester + 3 NADPH + 3 O2 + 2 H(+) = 3,8-divinyl protochlorophyllide a + 3 NADP(+) + 5 H2O. Its pathway is porphyrin-containing compound metabolism; chlorophyll biosynthesis (light-independent). Its function is as follows. Catalyzes the formation of the isocyclic ring in chlorophyll biosynthesis. Mediates the cyclase reaction, which results in the formation of divinylprotochlorophyllide (Pchlide) characteristic of all chlorophylls from magnesium-protoporphyrin IX 13-monomethyl ester (MgPMME). The chain is Magnesium-protoporphyrin IX monomethyl ester [oxidative] cyclase from Porphyra purpurea (Red seaweed).